Here is a 271-residue protein sequence, read N- to C-terminus: Putative phosphoenolpyruvate synthase regulatory protein (271 aa).

ADP is bound at residue 151 to 158 (GVSRSGKT).

This sequence belongs to the pyruvate, phosphate/water dikinase regulatory protein family. PSRP subfamily.

The enzyme catalyses [pyruvate, water dikinase] + ADP = [pyruvate, water dikinase]-phosphate + AMP + H(+). It carries out the reaction [pyruvate, water dikinase]-phosphate + phosphate + H(+) = [pyruvate, water dikinase] + diphosphate. Its function is as follows. Bifunctional serine/threonine kinase and phosphorylase involved in the regulation of the phosphoenolpyruvate synthase (PEPS) by catalyzing its phosphorylation/dephosphorylation. The protein is Putative phosphoenolpyruvate synthase regulatory protein of Burkholderia lata (strain ATCC 17760 / DSM 23089 / LMG 22485 / NCIMB 9086 / R18194 / 383).